We begin with the raw amino-acid sequence, 455 residues long: Phosphoglucosamine mutase (455 aa).

S107 serves as the catalytic Phosphoserine intermediate. Positions 107, 247, 249, and 251 each coordinate Mg(2+). S107 carries the phosphoserine modification.

The protein belongs to the phosphohexose mutase family. The cofactor is Mg(2+). Post-translationally, activated by phosphorylation.

The enzyme catalyses alpha-D-glucosamine 1-phosphate = D-glucosamine 6-phosphate. Catalyzes the conversion of glucosamine-6-phosphate to glucosamine-1-phosphate. This is Phosphoglucosamine mutase from Leuconostoc citreum (strain KM20).